A 458-amino-acid chain; its full sequence is Probable ECA polymerase (458 aa).

Transmembrane regions (helical) follow at residues 3–23 (LAQF…VLTL), 37–57 (VFFS…TCLL), 65–85 (VVPV…YAIY), 112–132 (THLT…IFFL), 154–174 (GVAL…VYFL), 180–200 (AWFF…VIVG), 201–221 (GTRA…IVRG), 222–242 (WISL…MFWL), 340–360 (LVVM…GMII), 377–397 (YKAA…IVLA), and 409–429 (VFFC…YWLF).

Belongs to the WzyE family. Probably part of a complex composed of WzxE, WzyE and WzzE.

It localises to the cell inner membrane. It functions in the pathway bacterial outer membrane biogenesis; enterobacterial common antigen biosynthesis. Probably involved in the polymerization of enterobacterial common antigen (ECA) trisaccharide repeat units. In Serratia proteamaculans (strain 568), this protein is Probable ECA polymerase.